A 251-amino-acid polypeptide reads, in one-letter code: Pyridoxine 5'-phosphate synthase (251 aa).

Asn-7 is a 3-amino-2-oxopropyl phosphate binding site. 9 to 10 (DH) provides a ligand contact to 1-deoxy-D-xylulose 5-phosphate. A 3-amino-2-oxopropyl phosphate-binding site is contributed by Arg-18. The active-site Proton acceptor is the His-43. 1-deoxy-D-xylulose 5-phosphate is bound by residues Arg-45 and His-50. The active-site Proton acceptor is the Glu-70. 1-deoxy-D-xylulose 5-phosphate is bound at residue Thr-100. His-198 serves as the catalytic Proton donor. Residues Ala-199 and 220-221 (GH) contribute to the 3-amino-2-oxopropyl phosphate site.

Belongs to the PNP synthase family. In terms of assembly, homooctamer; tetramer of dimers.

The protein localises to the cytoplasm. It carries out the reaction 3-amino-2-oxopropyl phosphate + 1-deoxy-D-xylulose 5-phosphate = pyridoxine 5'-phosphate + phosphate + 2 H2O + H(+). It participates in cofactor biosynthesis; pyridoxine 5'-phosphate biosynthesis; pyridoxine 5'-phosphate from D-erythrose 4-phosphate: step 5/5. Catalyzes the complicated ring closure reaction between the two acyclic compounds 1-deoxy-D-xylulose-5-phosphate (DXP) and 3-amino-2-oxopropyl phosphate (1-amino-acetone-3-phosphate or AAP) to form pyridoxine 5'-phosphate (PNP) and inorganic phosphate. In Dechloromonas aromatica (strain RCB), this protein is Pyridoxine 5'-phosphate synthase.